We begin with the raw amino-acid sequence, 564 residues long: Multidrug resistance protein 1 (564 aa).

Topologically, residues 1–115 (MHYRFLRDSF…NPQNWPTLQK (115 aa)) are cytoplasmic. Residues 60 to 101 (IDNQGEPNSSQSSSSNNTIVDNNNNNDNDVDGDKIVVTWDGD) form a disordered region. A compositionally biased stretch (low complexity) spans 67–86 (NSSQSSSSNNTIVDNNNNND). A helical membrane pass occupies residues 116-136 (AFFIFQISFLTTSVYMGSAVY). Topologically, residues 137 to 151 (TPGIEELMHDFGIGR) are extracellular. Residues 152–172 (VVATLPLTLFVIGYGVGPLVF) form a helical membrane-spanning segment. Residues 173–183 (SPMSENAIFGR) lie on the Cytoplasmic side of the membrane. The helical transmembrane segment at 184-204 (TSIYIITLFLFVILQIPTALV) threads the bilayer. The Extracellular segment spans residues 205 to 206 (NN). A helical membrane pass occupies residues 207–227 (IAGLCILRFLGGFFASPCLAT). At 228 to 242 (GGASVADVVKFWNLP) the chain is on the cytoplasmic side. Residues 243-263 (VGLAAWSLGAVCGPSFGPFFG) form a helical membrane-spanning segment. Residues 264 to 273 (SILTVKASWR) lie on the Extracellular side of the membrane. Residues 274–294 (WTFWFMCIISGFSFVMLCFTL) traverse the membrane as a helical segment. The Cytoplasmic portion of the chain corresponds to 295–350 (PETFGKTLLYRKAKRLRAITGNDRITSEGEVENSKMTSHELIIDTLWRPLEITVME). Residues 351 to 371 (PVVLLINIYIAMVYSILYLFF) form a helical membrane-spanning segment. Residues 372–390 (EVFPIYFVGVKHFTLVELG) lie on the Extracellular side of the membrane. A helical transmembrane segment spans residues 391–411 (TTYMSIVIGIVIAAFIYIPVI). Residues 412–428 (RQKFTKPILRQEQVFPE) lie on the Cytoplasmic side of the membrane. Residues 429–449 (VFIPIAIVGGILLTSGLFIFG) traverse the membrane as a helical segment. The Extracellular portion of the chain corresponds to 450–455 (WSANRT). N-linked (GlcNAc...) asparagine glycosylation is present at N453. Residues 456–476 (THWVGPLFGAATTASGAFLIF) traverse the membrane as a helical segment. Over 477–503 (QTLFNFMGASFKPHYIASVFASNDLFR) the chain is Cytoplasmic. The chain crosses the membrane as a helical span at residues 504 to 524 (SVIASVFPLFGAPLFDNLATP). The Extracellular portion of the chain corresponds to 525–528 (EYPV). Residues 529–549 (AWGSSVLGFITLVMIAIPVLF) traverse the membrane as a helical segment. Topologically, residues 550–564 (YLNGPKLRARSKYAN) are cytoplasmic.

It belongs to the major facilitator superfamily. CAR1 family.

It localises to the cell membrane. Its function is as follows. Plasma membrane multidrug efflux pump that confers resistance to numerous chemicals including azoles such as fluconazole, voriconazole, and benztriazoles, as well as to benomyl, cycloheximide, methotrexate, 4-nitroquinoline-N-oxide, sulfometuron methyl, cerulenin, and brefeldin A. This Candida albicans (strain SC5314 / ATCC MYA-2876) (Yeast) protein is Multidrug resistance protein 1.